The primary structure comprises 120 residues: MIF-like protein mif-2 (120 aa).

Belongs to the MIF family.

The polypeptide is MIF-like protein mif-2 (mif-2) (Caenorhabditis elegans).